A 369-amino-acid polypeptide reads, in one-letter code: Methionine import ATP-binding protein MetN 1 (369 aa).

The ABC transporter domain maps to 29-265; sequence IRLHGLGKRY…PRHAVTRSLL (237 aa). 62-69 contributes to the ATP binding site; it reads GRSGAGKS.

This sequence belongs to the ABC transporter superfamily. Methionine importer (TC 3.A.1.24) family. In terms of assembly, the complex is composed of two ATP-binding proteins (MetN), two transmembrane proteins (MetI) and a solute-binding protein (MetQ).

It localises to the cell inner membrane. The catalysed reaction is L-methionine(out) + ATP + H2O = L-methionine(in) + ADP + phosphate + H(+). It carries out the reaction D-methionine(out) + ATP + H2O = D-methionine(in) + ADP + phosphate + H(+). Its function is as follows. Part of the ABC transporter complex MetNIQ involved in methionine import. Responsible for energy coupling to the transport system. The sequence is that of Methionine import ATP-binding protein MetN 1 from Pseudomonas aeruginosa (strain ATCC 15692 / DSM 22644 / CIP 104116 / JCM 14847 / LMG 12228 / 1C / PRS 101 / PAO1).